The following is a 161-amino-acid chain: MTSIVEALVPGGKANPGPPLGPALGPLGVNIKEVVEKINEKTRDYNGMQVPVKVIVDDKKNVEIEVGTPPTASLVMKELGIQKGSGNAGSEVVGNLTIPQVAKIARMKKEDVLSYDLKATMKEVMGTCVPMGVNVEGMKAKDCQKALDEGKFDDLLANEAW.

It belongs to the universal ribosomal protein uL11 family. As to quaternary structure, part of the ribosomal stalk of the 50S ribosomal subunit. Interacts with L10 and the large rRNA to form the base of the stalk. L10 forms an elongated spine to which L12 dimers bind in a sequential fashion forming a multimeric L10(L12)X complex.

In terms of biological role, forms part of the ribosomal stalk which helps the ribosome interact with GTP-bound translation factors. This is Large ribosomal subunit protein uL11 from Methanosarcina mazei (strain ATCC BAA-159 / DSM 3647 / Goe1 / Go1 / JCM 11833 / OCM 88) (Methanosarcina frisia).